A 635-amino-acid chain; its full sequence is Voltage-gated potassium channel KCNC4 (635 aa).

The disordered stretch occupies residues 1–24 (MISSVCVSSYRGRKSGNKPPSKTC). The interval 1-28 (MISSVCVSSYRGRKSGNKPPSKTCLKEE) is inactivation gate. The Cytoplasmic portion of the chain corresponds to 1–226 (MISSVCVSSY…EDPYSSRAAR (226 aa)). A phosphoserine mark is found at serine 8, serine 9, serine 15, and serine 21. Positions 116, 122, 143, and 144 each coordinate Zn(2+). The disordered stretch occupies residues 160–180 (IFESPDGGGSGAGPSDEAGDD). The chain crosses the membrane as a helical span at residues 227–247 (VVAFASLFFILVSITTFCLET). N-linked (GlcNAc...) asparagine glycosylation is found at asparagine 256 and asparagine 265. The helical transmembrane segment at 278 to 298 (EPILTYIEGVCVLWFTLEFLV) threads the bilayer. The Cytoplasmic portion of the chain corresponds to 299 to 312 (RIVCCPDTLDFVKN). A helical transmembrane segment spans residues 313-333 (LLNIIDFVAILPFYLEVGLSG). The chain crosses the membrane as a helical; Voltage-sensor span at residues 345–364 (FLRVVRFVRILRIFKLTRHF). Residues 365–380 (VGLRVLGHTLRASTNE) lie on the Cytoplasmic side of the membrane. The helical transmembrane segment at 381-401 (FLLLIIFLALGVLIFATMIYY) threads the bilayer. Residues threonine 436, leucine 437, glycine 438, and tyrosine 439 each contribute to the K(+) site. The Selectivity filter motif lies at 436 to 441 (TLGYGD). Residues 452–472 (VGALCALAGVLTIAMPVPVIV) traverse the membrane as a helical segment. Residues 473 to 635 (NNFGMYYSLA…PTAGTLFLPH (163 aa)) are Cytoplasmic-facing. Residues 490–580 (KKRKKHVPRP…RRALRRSTTR (91 aa)) form a disordered region. Residues 527–542 (AREEGMIERKRADSKQ) show a composition bias toward basic and acidic residues.

It belongs to the potassium channel family. C (Shaw) (TC 1.A.1.2) subfamily. Kv3.4/KCNC4 sub-subfamily. In terms of assembly, homotetramer. Heterotetramer of potassium channel proteins. Post-translationally, phosphorylation of serine residues in the inactivation gate inhibits rapid channel closure.

Its subcellular location is the membrane. The catalysed reaction is K(+)(in) = K(+)(out). Voltage-gated potassium channel that opens in response to the voltage difference across the membrane, forming a potassium-selective channel through which potassium ions pass in accordance with their electrochemical gradient. The channel displays rapid activation and inactivation kinetics. This chain is Voltage-gated potassium channel KCNC4, found in Homo sapiens (Human).